Consider the following 368-residue polypeptide: Endoglucanase (368 aa).

Residues M1 to A21 form the signal peptide. E55 functions as the Proton donor in the catalytic mechanism. D116 functions as the Nucleophile in the catalytic mechanism.

It belongs to the glycosyl hydrolase 8 (cellulase D) family.

It is found in the secreted. The catalysed reaction is Endohydrolysis of (1-&gt;4)-beta-D-glucosidic linkages in cellulose, lichenin and cereal beta-D-glucans.. The protein operates within glycan metabolism; bacterial cellulose biosynthesis. Its function is as follows. Hydrolyzes carboxymethylcellulose. In Escherichia coli O157:H7, this protein is Endoglucanase (bcsZ).